The sequence spans 394 residues: Argininosuccinate synthase (394 aa).

8–16 (AYSGGLDTS) lines the ATP pocket. Positions 86 and 91 each coordinate L-citrulline. Gly-116 contacts ATP. Residues Thr-118, Asn-122, and Asp-123 each contribute to the L-aspartate site. Residue Asn-122 participates in L-citrulline binding. The L-citrulline site is built by Arg-126, Ser-172, Ser-181, Glu-257, and Tyr-269.

Belongs to the argininosuccinate synthase family. Type 1 subfamily. As to quaternary structure, homotetramer.

Its subcellular location is the cytoplasm. The catalysed reaction is L-citrulline + L-aspartate + ATP = 2-(N(omega)-L-arginino)succinate + AMP + diphosphate + H(+). The protein operates within amino-acid biosynthesis; L-arginine biosynthesis; L-arginine from L-ornithine and carbamoyl phosphate: step 2/3. The sequence is that of Argininosuccinate synthase from Methanosarcina acetivorans (strain ATCC 35395 / DSM 2834 / JCM 12185 / C2A).